Here is a 503-residue protein sequence, read N- to C-terminus: Angiopoietin-4 (503 aa).

The signal sequence occupies residues 1–24 (MLSQLAMLQGSLLLVVATMSVAQQ). A coiled-coil region spans residues 84 to 238 (TQQVKQLEQA…RQSAALTNIE (155 aa)). 9 N-linked (GlcNAc...) asparagine glycosylation sites follow: N96, N126, N140, N158, N247, N274, N311, N337, and N427. The region spanning 282–502 (MAGEQVFQDC…ASRMMIRPLD (221 aa)) is the Fibrinogen C-terminal domain. The cysteines at positions 291 and 320 are disulfide-linked. C444 and C457 are disulfide-bonded.

As to quaternary structure, homodimer; disulfide-linked. Interacts with TEK/TIE2. In terms of tissue distribution, highly expressed in the lung with much lower levels found in other tissues.

The protein localises to the secreted. Binds to TEK/TIE2, modulating ANGPT1 signaling. Can induce tyrosine phosphorylation of TEK/TIE2. Promotes endothelial cell survival, migration and angiogenesis. This Homo sapiens (Human) protein is Angiopoietin-4 (ANGPT4).